A 545-amino-acid polypeptide reads, in one-letter code: Chaperonin GroEL (545 aa).

ATP-binding positions include 30–33 (TLGP), K51, 87–91 (DGTTT), G415, 479–481 (NAA), and D495. The tract at residues 526-545 (KDDAPAPAMPDMGGMGGMGM) is disordered.

This sequence belongs to the chaperonin (HSP60) family. As to quaternary structure, forms a cylinder of 14 subunits composed of two heptameric rings stacked back-to-back. Interacts with the co-chaperonin GroES.

The protein resides in the cytoplasm. It carries out the reaction ATP + H2O + a folded polypeptide = ADP + phosphate + an unfolded polypeptide.. Functionally, together with its co-chaperonin GroES, plays an essential role in assisting protein folding. The GroEL-GroES system forms a nano-cage that allows encapsulation of the non-native substrate proteins and provides a physical environment optimized to promote and accelerate protein folding. This is Chaperonin GroEL from Paracidovorax citrulli (strain AAC00-1) (Acidovorax citrulli).